Here is a 311-residue protein sequence, read N- to C-terminus: Probable manganese-dependent inorganic pyrophosphatase (311 aa).

6 residues coordinate Mn(2+): His-9, Asp-13, Asp-15, Asp-77, His-99, and Asp-151.

The protein belongs to the PPase class C family. Mn(2+) serves as cofactor.

The protein localises to the cytoplasm. The enzyme catalyses diphosphate + H2O = 2 phosphate + H(+). In Streptococcus pyogenes serotype M1, this protein is Probable manganese-dependent inorganic pyrophosphatase.